A 348-amino-acid polypeptide reads, in one-letter code: 5-deoxyribose 1-phosphate isomerase (348 aa).

Residues 49–51, Arg-92, and Gln-199 contribute to the substrate site; that span reads RGA. The active-site Proton donor is Asp-240. A substrate-binding site is contributed by 250–251; that stretch reads NK.

This sequence belongs to the EIF-2B alpha/beta/delta subunits family. DrdI subfamily. Homodimer.

The enzyme catalyses 5-deoxy-alpha-D-ribose 1-phosphate = 5-deoxy-D-ribulose 1-phosphate. It catalyses the reaction 5-(methylsulfanyl)-alpha-D-ribose 1-phosphate = 5-(methylsulfanyl)-D-ribulose 1-phosphate. The protein operates within carbohydrate degradation. In terms of biological role, catalyzes the isomerization of 5-deoxy-alpha-D-ribose 1-phosphate to 5-deoxy-D-ribulose 1-phosphate, as part of a 5-deoxyribose salvage pathway that recycles this toxic radical SAM enzyme by-product to mainstream metabolites. Also seems to be able to catalyze the conversion of methylthioribose-1-phosphate (MTR-1-P) into methylthioribulose-1-phosphate (MTRu-1-P). However this enzyme may not function in methionine salvage in B.thuringiensis since it exists a paralog (MtnA) present in the methionine salvage pathway cluster. The chain is 5-deoxyribose 1-phosphate isomerase from Bacillus thuringiensis serovar kurstaki (strain ATCC 35866 / NRRL B-4488 / HD73).